A 565-amino-acid polypeptide reads, in one-letter code: Putative ribonucleoside-diphosphate reductase large subunit (565 aa).

Residues S60, S74–C75, G103, N256–E260, and P400–S404 each bind substrate. C75 and C273 are oxidised to a cystine. N256 functions as the Proton acceptor in the catalytic mechanism. C258 acts as the Cysteine radical intermediate in catalysis. Residue E260 is the Proton acceptor of the active site.

The protein belongs to the ribonucleoside diphosphate reductase large chain family. Heterotetramer composed of a homodimer of the large subunit (R1) and a homodimer of the small subunit (R2). Larger multisubunit protein complex are also active, composed of (R1)n(R2)n.

The catalysed reaction is a 2'-deoxyribonucleoside 5'-diphosphate + [thioredoxin]-disulfide + H2O = a ribonucleoside 5'-diphosphate + [thioredoxin]-dithiol. With respect to regulation, under complex allosteric control mediated by deoxynucleoside triphosphates and ATP binding. The type of nucleotide bound at the specificity site determines substrate preference. It seems probable that ATP makes the enzyme reduce CDP and UDP, dGTP favors ADP reduction and dTTP favors GDP reduction. Ribonucleoside-diphosphate reductase holoenzyme provides the precursors necessary for viral DNA synthesis. Allows virus growth in non-dividing cells. Catalyzes the biosynthesis of deoxyribonucleotides from the corresponding ribonucleotides. This Frog virus 3 (isolate Goorha) (FV-3) protein is Putative ribonucleoside-diphosphate reductase large subunit.